The primary structure comprises 288 residues: Homoserine kinase (288 aa).

79-89 (PPARGLGSSSA) lines the ATP pocket.

The protein belongs to the GHMP kinase family. Homoserine kinase subfamily.

It is found in the cytoplasm. The catalysed reaction is L-homoserine + ATP = O-phospho-L-homoserine + ADP + H(+). Its pathway is amino-acid biosynthesis; L-threonine biosynthesis; L-threonine from L-aspartate: step 4/5. Its function is as follows. Catalyzes the ATP-dependent phosphorylation of L-homoserine to L-homoserine phosphate. The protein is Homoserine kinase of Listeria welshimeri serovar 6b (strain ATCC 35897 / DSM 20650 / CCUG 15529 / CIP 8149 / NCTC 11857 / SLCC 5334 / V8).